The sequence spans 154 residues: Putative lipoprotein MAB_4074c (154 aa).

The signal sequence occupies residues 1 to 21; the sequence is MMNRVIVGAMGLLAAGAVVVG. The N-palmitoyl cysteine moiety is linked to residue cysteine 22. Cysteine 22 is lipidated: S-diacylglycerol cysteine.

This sequence belongs to the mycobacterial 19 kDa antigen family.

The protein resides in the cell membrane. This chain is Putative lipoprotein MAB_4074c, found in Mycobacteroides abscessus (strain ATCC 19977 / DSM 44196 / CCUG 20993 / CIP 104536 / JCM 13569 / NCTC 13031 / TMC 1543 / L948) (Mycobacterium abscessus).